The primary structure comprises 98 residues: Large ribosomal subunit protein uL23 (98 aa).

The protein belongs to the universal ribosomal protein uL23 family. In terms of assembly, part of the 50S ribosomal subunit. Contacts protein L29, and trigger factor when it is bound to the ribosome.

Its function is as follows. One of the early assembly proteins it binds 23S rRNA. One of the proteins that surrounds the polypeptide exit tunnel on the outside of the ribosome. Forms the main docking site for trigger factor binding to the ribosome. The sequence is that of Large ribosomal subunit protein uL23 from Rickettsia africae (strain ESF-5).